Reading from the N-terminus, the 280-residue chain is Pantothenate synthetase (280 aa).

31–38 (MGNLHAGH) provides a ligand contact to ATP. Histidine 38 acts as the Proton donor in catalysis. Glutamine 62 provides a ligand contact to (R)-pantoate. Glutamine 62 is a beta-alanine binding site. ATP is bound at residue 150 to 153 (GKKD). Glutamine 156 is a binding site for (R)-pantoate. ATP is bound by residues valine 179 and 187–190 (MSSR).

The protein belongs to the pantothenate synthetase family. Homodimer.

It is found in the cytoplasm. The catalysed reaction is (R)-pantoate + beta-alanine + ATP = (R)-pantothenate + AMP + diphosphate + H(+). Its pathway is cofactor biosynthesis; (R)-pantothenate biosynthesis; (R)-pantothenate from (R)-pantoate and beta-alanine: step 1/1. Functionally, catalyzes the condensation of pantoate with beta-alanine in an ATP-dependent reaction via a pantoyl-adenylate intermediate. This Xanthomonas euvesicatoria pv. vesicatoria (strain 85-10) (Xanthomonas campestris pv. vesicatoria) protein is Pantothenate synthetase.